A 297-amino-acid chain; its full sequence is Endonuclease G, mitochondrial (297 aa).

A mitochondrion-targeting transit peptide spans Met-1–Ala-48. A Phosphothreonine; by GSK3-beta modification is found at Thr-128. Residue His-141 is the Proton acceptor of the active site. A Mg(2+)-binding site is contributed by Asn-172. Positions Ala-286–Ser-296 are essential for deoxyribonuclease activity. Ser-288 carries the phosphoserine; by GSK3-beta modification.

It belongs to the DNA/RNA non-specific endonuclease family. In terms of assembly, homodimer; disulfide-linked. Homodimerization is essential for enzyme activity. Interacts with YWHAG. Mg(2+) is required as a cofactor. In terms of processing, GSK3-beta-mediated dual phosphorylations at Thr-128 and Ser-288 is necessary for its interaction with YWHAG and the induction of autophagy.

The protein resides in the mitochondrion. In terms of biological role, endonuclease that preferentially catalyzes the cleavage of double-stranded 5-hydroxymethylcytosine (5hmC)-modified DNA. The 5hmC-modified nucleotide does not increase the binding affinity, but instead increases the efficiency of cutting and specifies the site of cleavage for the modified DNAs. Shows significantly higher affinity for four-stranded Holliday junction over duplex and single-stranded DNAs. Promotes conservative recombination when the DNA is 5hmC-modified. Promotes autophagy through the suppression of mTOR by its phosphorylation-mediated interaction with YWHAG and its endonuclease activity-mediated DNA damage response. GSK3-beta mediated phosphorylation of ENDOG enhances its interaction with YWHAG, leading to the release of TSC2 and PIK3C3 from YWHAG resulting in mTOR pathway suppression and autophagy initiation. Promotes cleavage of mtDNA in response to oxidative and nitrosative stress, in turn inducing compensatory mtDNA replication. The chain is Endonuclease G, mitochondrial (ENDOG) from Homo sapiens (Human).